A 326-amino-acid chain; its full sequence is MKENFWSTLPRPFFILAPMEDVTDIVFRHVVSEAARPDVFFTEFTNTESYCHPEGIHSVRGRLTFSDDEQPMVAHIWGDKPEQFREMSIGLADMGFKGIDLNMGCPVANVAKKGKGSGLILRPETAAEIIQASKAGGLPVSVKTRLGYYDIDEWRDWLKHVFEQDIANLSIHLRTRKEMSKVDAHWELIEAIKTLRDEIAPNTLLTINGDIPDRQTGLELANKYGIDGIMIGRGIFHNPFAFEKEPREHSSKELLGLLRLHLSLFEKYDKDEARHFKSLRRFFKIYVRGIRGASELRHQLMNTQSIAEARELLDTFEARMDARSEV.

18–20 provides a ligand contact to FMN; it reads PME. The active-site Proton donor is C105. FMN-binding positions include K143, 208–210, and 232–233; these read NGD and GR.

It belongs to the Dus family. It depends on FMN as a cofactor.

The catalysed reaction is a 5,6-dihydrouridine in tRNA + NAD(+) = a uridine in tRNA + NADH + H(+). It carries out the reaction a 5,6-dihydrouridine in tRNA + NADP(+) = a uridine in tRNA + NADPH + H(+). Its function is as follows. Catalyzes the synthesis of 5,6-dihydrouridine (D), a modified base found in the D-loop of most tRNAs, via the reduction of the C5-C6 double bond in target uridines. The sequence is that of Probable tRNA-dihydrouridine synthase (dus) from Staphylococcus epidermidis (strain ATCC 35984 / DSM 28319 / BCRC 17069 / CCUG 31568 / BM 3577 / RP62A).